Reading from the N-terminus, the 624-residue chain is Ubiquilin-2 (624 aa).

2 disordered regions span residues 1-32 (MAEN…EPKI) and 106-141 (NRPQ…TNSN). N-acetylalanine is present on A2. Over residues 15–32 (RGPAAAQGSAAAPAEPKI) the composition is skewed to low complexity. The region spanning 33–107 (IKVTVKTPKE…VHLVIKSQNR (75 aa)) is the Ubiquitin-like domain. Over residues 106-115 (NRPQGQSTQP) the composition is skewed to polar residues. Low complexity predominate over residues 116-141 (SNAAGTNTTSASTPRSNSTPISTNSN). 2 STI1 domains span residues 178–206 (SPEM…QLIM) and 208–247 (NPQM…MQEM). A disordered region spans residues 287-349 (FGGNPFASVG…SGSGNSSSNA (63 aa)). Residues 294–304 (SVGSSSSSGEG) are compositionally biased toward low complexity. Residues 316 to 325 (LPNPWAPPPA) are compositionally biased toward pro residues. A compositionally biased stretch (low complexity) spans 326–349 (TQSSATTSTTTSTGSGSGNSSSNA). STI1 domains lie at 379-426 (NPQL…QEQM) and 430-462 (LPAF…QQGL). Repeat copies occupy residues 491-493 (PVG), 494-496 (PVT), 497-499 (PIG), 500-502 (PIG), 503-505 (PIV), 506-508 (PFT), 509-511 (PIG), 512-514 (PIG), 515-517 (PIG), 518-520 (PTG), 521-523 (PAA), and 524-526 (PPG). Residues 491–526 (PVGPVTPIGPIGPIVPFTPIGPIGPIGPTGPAAPPG) form a 12 X 3 AA tandem repeats of P-X-X region. The disordered stretch occupies residues 512–556 (PIGPIGPTGPAAPPGSTGSGGPTGPTVSSAAPSETTSPTSESGPN). Positions 535–553 (GPTVSSAAPSETTSPTSES) are enriched in low complexity. Residues 581 to 621 (RFQQQLEQLNAMGFLNREANLQALIATGGDINAAIERLLGS) form the UBA domain.

In terms of assembly, homodimer. Forms heterodimer with UBQLN1. Binds UBE3A and BTRC. Interacts with the 19S proteasome subunit. Interacts with C9orf72. Interacts with HNRNPA1 and HNRNPU. Found in a complex with UBQLN1 and MAP1LC3A/B/C. Interacts with EPS15, EPN1 and EPN2. Interacts with HERPUD1. Interacts with RAD23A. Interacts with TARDBP. Interacts (via C-terminus) with FAF2 (via N-terminus). Interacts with UBQLN4. Binds CD47. Post-translationally, degraded during macroautophagy.

It is found in the cytoplasm. Its subcellular location is the nucleus. It localises to the membrane. The protein resides in the cytoplasmic vesicle. The protein localises to the autophagosome. Plays an important role in the regulation of different protein degradation mechanisms and pathways including ubiquitin-proteasome system (UPS), autophagy and the endoplasmic reticulum-associated protein degradation (ERAD) pathway. Mediates the proteasomal targeting of misfolded or accumulated proteins for degradation by binding (via UBA domain) to their polyubiquitin chains and by interacting (via ubiquitin-like domain) with the subunits of the proteasome. Plays a role in the ERAD pathway via its interaction with ER-localized proteins FAF2/UBXD8 and HERPUD1 and may form a link between the polyubiquitinated ERAD substrates and the proteasome. Involved in the regulation of macroautophagy and autophagosome formation; required for maturation of autophagy-related protein LC3 from the cytosolic form LC3-I to the membrane-bound form LC3-II and may assist in the maturation of autophagosomes to autolysosomes by mediating autophagosome-lysosome fusion. Negatively regulates the endocytosis of GPCR receptors: AVPR2 and ADRB2, by specifically reducing the rate at which receptor-arrestin complexes concentrate in clathrin-coated pits (CCPs). In Homo sapiens (Human), this protein is Ubiquilin-2 (UBQLN2).